Reading from the N-terminus, the 103-residue chain is Large ribosomal subunit protein eL30 (103 aa).

Belongs to the eukaryotic ribosomal protein eL30 family.

The polypeptide is Large ribosomal subunit protein eL30 (Methanosarcina mazei (strain ATCC BAA-159 / DSM 3647 / Goe1 / Go1 / JCM 11833 / OCM 88) (Methanosarcina frisia)).